We begin with the raw amino-acid sequence, 496 residues long: Aspartyl/glutamyl-tRNA(Asn/Gln) amidotransferase subunit B (496 aa).

This sequence belongs to the GatB/GatE family. GatB subfamily. Heterotrimer of A, B and C subunits.

It catalyses the reaction L-glutamyl-tRNA(Gln) + L-glutamine + ATP + H2O = L-glutaminyl-tRNA(Gln) + L-glutamate + ADP + phosphate + H(+). The enzyme catalyses L-aspartyl-tRNA(Asn) + L-glutamine + ATP + H2O = L-asparaginyl-tRNA(Asn) + L-glutamate + ADP + phosphate + 2 H(+). Functionally, allows the formation of correctly charged Asn-tRNA(Asn) or Gln-tRNA(Gln) through the transamidation of misacylated Asp-tRNA(Asn) or Glu-tRNA(Gln) in organisms which lack either or both of asparaginyl-tRNA or glutaminyl-tRNA synthetases. The reaction takes place in the presence of glutamine and ATP through an activated phospho-Asp-tRNA(Asn) or phospho-Glu-tRNA(Gln). The protein is Aspartyl/glutamyl-tRNA(Asn/Gln) amidotransferase subunit B of Nitrosospira multiformis (strain ATCC 25196 / NCIMB 11849 / C 71).